A 460-amino-acid polypeptide reads, in one-letter code: Ribosomal protein uS12 methylthiotransferase RimO (460 aa).

In terms of domain architecture, MTTase N-terminal spans 18–134; sequence MKIHITSLGC…VTSIVAEVLR (117 aa). [4Fe-4S] cluster is bound by residues cysteine 27, cysteine 63, cysteine 97, cysteine 171, cysteine 175, and cysteine 178. The Radical SAM core domain maps to 157–387; it reads STPFHYAYVK…MVLQQEISLS (231 aa). Residues 390-456 form the TRAM domain; sequence QEWIGKTLEV…HYDLMGEAID (67 aa).

The protein belongs to the methylthiotransferase family. RimO subfamily. [4Fe-4S] cluster serves as cofactor.

Its subcellular location is the cytoplasm. The enzyme catalyses L-aspartate(89)-[ribosomal protein uS12]-hydrogen + (sulfur carrier)-SH + AH2 + 2 S-adenosyl-L-methionine = 3-methylsulfanyl-L-aspartate(89)-[ribosomal protein uS12]-hydrogen + (sulfur carrier)-H + 5'-deoxyadenosine + L-methionine + A + S-adenosyl-L-homocysteine + 2 H(+). Functionally, catalyzes the methylthiolation of an aspartic acid residue of ribosomal protein uS12. The polypeptide is Ribosomal protein uS12 methylthiotransferase RimO (Heliobacterium modesticaldum (strain ATCC 51547 / Ice1)).